We begin with the raw amino-acid sequence, 132 residues long: Ribosome-binding factor A (132 aa).

Belongs to the RbfA family. In terms of assembly, monomer. Binds 30S ribosomal subunits, but not 50S ribosomal subunits or 70S ribosomes.

Its subcellular location is the cytoplasm. Its function is as follows. One of several proteins that assist in the late maturation steps of the functional core of the 30S ribosomal subunit. Associates with free 30S ribosomal subunits (but not with 30S subunits that are part of 70S ribosomes or polysomes). Required for efficient processing of 16S rRNA. May interact with the 5'-terminal helix region of 16S rRNA. The protein is Ribosome-binding factor A of Burkholderia multivorans (strain ATCC 17616 / 249).